Consider the following 536-residue polypeptide: DEAD-box ATP-dependent RNA helicase 41 (536 aa).

Residues 1 to 10 (MEQEENHSAD) are compositionally biased toward basic and acidic residues. A disordered region spans residues 1 to 25 (MEQEENHSADHLSAQPGNGNELEES). The HIT-type zinc-finger motif lies at 40–69 (GEPRCVICGRYGEYICDQTDDDICSVECKT). The Q motif motif lies at 137 to 165 (MCFSSSGLPEKLVLNLEAAGYVMPTPVQM). Residues 168–344 (IPSSICNRSL…NSLAKNAIHI (177 aa)) form the Helicase ATP-binding domain. An ATP-binding site is contributed by 181–188 (ADTGSGKT). Positions 293–296 (DEVD) match the DEAD box motif. The Helicase C-terminal domain occupies 355–518 (SVKQVVIWVE…PIPRELANSK (164 aa)).

Belongs to the DEAD box helicase family. DDX59 subfamily.

It carries out the reaction ATP + H2O = ADP + phosphate + H(+). The chain is DEAD-box ATP-dependent RNA helicase 41 from Oryza sativa subsp. japonica (Rice).